Reading from the N-terminus, the 543-residue chain is Zinc finger protein egl-43 (543 aa).

The positive regulatory (PR) domain stretch occupies residues 2-62 (SIDTDFLTSV…NLIKEADDGE (61 aa)). 2 C2H2-type zinc fingers span residues 159-181 (HKCG…SHIH) and 187-209 (FRCH…RRVH). The segment at 213–233 (WTCPTCQSQMPSQAALTKHRP) adopts a C2H2-type 3; atypical zinc-finger fold. Residues 299–380 (PDAECSSGHA…TSTKKRPTSH (82 aa)) are disordered. Residues 306–317 (GHASESSPTTTE) show a composition bias toward polar residues. Basic and acidic residues predominate over residues 335-348 (TTSKSDDGEDRDSI). C2H2-type zinc fingers lie at residues 444–466 (YTCK…LRTH) and 472–495 (YKCQ…RNIH). The tract at residues 496–543 (NKPNTSLTPHNHHRQRSLHNSTSTSTTTTTVHHPLLHLPGTSVPVPKV) is disordered. Residues 513–533 (LHNSTSTSTTTTTVHHPLLHL) show a composition bias toward low complexity.

The protein localises to the nucleus. In terms of biological role, probable transcription factor, required for migration of the hermaphrodite-specific motor neurons (HSNs) from the tail to the gonad primordium during HSN cell differentiation. Required for phasmid neuron development. Required to specify the pi-cell fate of ventral uterine precursor cell (VU) cells. Functionally, probable transcription factor, involved in lin-12 (Notch)-dependent anchor cell (AC) and ventral uterine (VU) precursor cell fate specification and in AC invasion. Prevents AC proliferation after AC cell specification by repressing lin-12 expression. May form a positive feedback loop, together with the transcription factor fos-1, that maintains mutual high levels of expression and so activates AC invasion. Its function is as follows. Dispensable for anchor cell (AC) invasion and for preventing AC proliferation. This chain is Zinc finger protein egl-43, found in Caenorhabditis elegans.